Here is a 33-residue protein sequence, read N- to C-terminus: Alpha-amanitin proprotein 2 (33 aa).

The propeptide occupies 1-10 (MSDINATRLP). I11 bears the (3R,4R)-4,5-dihydroxyisoleucine; in form alpha-amanitin mark. The residue at position 11 (I11) is a (3R,4S)-4-hydroxyisoleucine; in form gamma-amanitin. The cyclopeptide (Ile-Pro) cross-link spans 11–18 (IWGIGCNP). A cross-link (2'-cysteinyl-6'-hydroxytryptophan sulfoxide (Trp-Cys)) is located at residues 12-16 (WGIGC). The residue at position 18 (P18) is a 4-hydroxyproline. Positions 19–33 (CVGDDVTSVLTRGEA) are excised as a propeptide.

It belongs to the MSDIN fungal toxin family. Post-translationally, processed by the macrocyclase-peptidase enzyme POPB to yield a toxic cyclic octapeptide. POPB first removes 10 residues from the N-terminus. Conformational trapping of the remaining peptide forces the enzyme to release this intermediate rather than proceed to macrocyclization. The enzyme rebinds the remaining peptide in a different conformation and catalyzes macrocyclization of the N-terminal 8 residues. As to expression, expressed in basidiocarps.

Major toxin belonging to the bicyclic octapeptides amatoxins that acts by binding non-competitively to RNA polymerase II and greatly slowing the elongation of transcripts from target promoters. In Amanita exitialis (Guangzhou destroying angel), this protein is Alpha-amanitin proprotein 2.